We begin with the raw amino-acid sequence, 155 residues long: Photosystem II extrinsic protein V (155 aa).

The first 20 residues, 1-20, serve as a signal peptide directing secretion; sequence MFVKMIGWLVLFLFAHQTWA. 4 residues coordinate heme c: cysteine 50, cysteine 53, histidine 54, and histidine 105.

Belongs to the cytochrome c family. PsbV subfamily. In terms of assembly, PSII is composed of 1 copy each of membrane proteins PsbA, PsbB, PsbC, PsbD, PsbE, PsbF, PsbH, PsbI, PsbJ, PsbK, PsbL, PsbM, PsbT, PsbY, PsbZ, Psb30/Ycf12, at least 3 peripheral proteins of the oxygen-evolving complex and a large number of cofactors. It forms dimeric complexes. The extrinsic subunits in red algae are PsbO (OEC33), PsbQ', cytochrome c-550 and PsbU. Heme c serves as cofactor.

The protein localises to the plastid. It localises to the chloroplast thylakoid membrane. One of the extrinsic, lumenal subunits of photosystem II (PSII). PSII is a light-driven water plastoquinone oxidoreductase, using light energy to abstract electrons from H(2)O, generating a proton gradient subsequently used for ATP formation. The extrinsic proteins stabilize the structure of photosystem II oxygen-evolving complex (OEC), the ion environment of oxygen evolution and protect the OEC against heat-induced inactivation. Unlike the T.vulcanus ortholog, it does not bind by itself to PSII, but requires all extrinsic members of the OEC. In Cyanidium caldarium (Red alga), this protein is Photosystem II extrinsic protein V.